We begin with the raw amino-acid sequence, 575 residues long: uncharacterized protein (575 aa).

A signal peptide spans 1–28; it reads MSNLLWKSLVVSPAVLGATLLVSSAAIA. The SLH domain maps to 87–151; sequence SVSQFSDVQP…DRVNELIATA (65 aa). Positions 158–196 form a coiled coil; sequence KQDLATLQRLQEEFSAELATLRGRVDALEARTAELEANQ.

This sequence belongs to the OprB family.

This is an uncharacterized protein from Nostoc sp. (strain PCC 7120 / SAG 25.82 / UTEX 2576).